A 154-amino-acid polypeptide reads, in one-letter code: 2S sulfur-rich seed storage protein 2 (154 aa).

Residues 1–22 (MAKMSVVAAALLALLVLGQATA) form the signal peptide. The tract at residues 29 to 52 (TTLEEEQEENPRGRSEQQCREQME) is disordered. Residues 37 to 52 (ENPRGRSEQQCREQME) show a composition bias toward basic and acidic residues. Intrachain disulfides connect cysteine 47/cysteine 101, cysteine 60/cysteine 90, cysteine 91/cysteine 138, and cysteine 103/cysteine 145. A propeptide spanning residues 72-76 (PYQNP) is cleaved from the precursor. The propeptide occupies 151-154 (TAWL).

Belongs to the 2S seed storage albumins family. The mature protein consists of a small and a large chain linked by disulfide bonds.

In terms of biological role, this is a 2S seed storage protein. In Bertholletia excelsa (Brazil nut), this protein is 2S sulfur-rich seed storage protein 2 (BE2S2).